The chain runs to 54 residues: UPF0391 membrane protein Rmet_0093 (54 aa).

2 consecutive transmembrane segments (helical) span residues 5-25 (ALVFFIVALIAAIFGFGGIAA) and 30-50 (IAKILFLIFLVVAIVTFVMGL).

This sequence belongs to the UPF0391 family.

It localises to the cell membrane. The sequence is that of UPF0391 membrane protein Rmet_0093 from Cupriavidus metallidurans (strain ATCC 43123 / DSM 2839 / NBRC 102507 / CH34) (Ralstonia metallidurans).